Reading from the N-terminus, the 187-residue chain is Dihydrofolate reductase (187 aa).

The DHFR domain occupies 4–185 (PLNCIVAVSQ…IKYKFEVYEK (182 aa)). NADP(+)-binding positions include A10 and 16–22 (GIGKNGD). 31–36 (EFQYFQ) lines the substrate pocket. 55–57 (RKT) contacts NADP(+). R71 contacts substrate. NADP(+) contacts are provided by residues 77-79 (SRE) and 117-124 (GGSSVYKE).

This sequence belongs to the dihydrofolate reductase family. In terms of assembly, homodimer.

The protein resides in the mitochondrion. It is found in the cytoplasm. It catalyses the reaction (6S)-5,6,7,8-tetrahydrofolate + NADP(+) = 7,8-dihydrofolate + NADPH + H(+). It participates in cofactor biosynthesis; tetrahydrofolate biosynthesis; 5,6,7,8-tetrahydrofolate from 7,8-dihydrofolate: step 1/1. Its function is as follows. Key enzyme in folate metabolism. Contributes to the de novo mitochondrial thymidylate biosynthesis pathway. Catalyzes an essential reaction for de novo glycine and purine synthesis, and for DNA precursor synthesis. Binds its own mRNA and that of DHFR2. The polypeptide is Dihydrofolate reductase (DHFR) (Bos taurus (Bovine)).